A 98-amino-acid chain; its full sequence is NADH-ubiquinone oxidoreductase chain 4L (98 aa).

3 consecutive transmembrane segments (helical) span residues 1 to 21 (MSLVHINILMAFIMSLTGLLM), 29 to 49 (ALLCLEGMMLSLFVLATLTIL), and 61 to 81 (IILLVFAACEAAIGLALLVMI).

The protein belongs to the complex I subunit 4L family. As to quaternary structure, core subunit of respiratory chain NADH dehydrogenase (Complex I) which is composed of 45 different subunits.

The protein localises to the mitochondrion inner membrane. It carries out the reaction a ubiquinone + NADH + 5 H(+)(in) = a ubiquinol + NAD(+) + 4 H(+)(out). Its function is as follows. Core subunit of the mitochondrial membrane respiratory chain NADH dehydrogenase (Complex I) which catalyzes electron transfer from NADH through the respiratory chain, using ubiquinone as an electron acceptor. Part of the enzyme membrane arm which is embedded in the lipid bilayer and involved in proton translocation. The protein is NADH-ubiquinone oxidoreductase chain 4L (MT-ND4L) of Delphinapterus leucas (Beluga whale).